The chain runs to 859 residues: DNA mismatch repair protein MutS (859 aa).

618 to 625 (GPNMGGKS) contributes to the ATP binding site.

This sequence belongs to the DNA mismatch repair MutS family.

This protein is involved in the repair of mismatches in DNA. It is possible that it carries out the mismatch recognition step. This protein has a weak ATPase activity. The protein is DNA mismatch repair protein MutS of Shewanella sediminis (strain HAW-EB3).